Here is a 341-residue protein sequence, read N- to C-terminus: Phenylalanine--tRNA ligase alpha subunit (341 aa).

Residue Glu254 coordinates Mg(2+).

Belongs to the class-II aminoacyl-tRNA synthetase family. Phe-tRNA synthetase alpha subunit type 1 subfamily. As to quaternary structure, tetramer of two alpha and two beta subunits. Mg(2+) serves as cofactor.

Its subcellular location is the cytoplasm. The catalysed reaction is tRNA(Phe) + L-phenylalanine + ATP = L-phenylalanyl-tRNA(Phe) + AMP + diphosphate + H(+). The polypeptide is Phenylalanine--tRNA ligase alpha subunit (Chlorobium phaeobacteroides (strain DSM 266 / SMG 266 / 2430)).